A 787-amino-acid polypeptide reads, in one-letter code: ABC transporter G family member 5 (787 aa).

The segment covering 1–17 (MSRFVDKLPLFDRRPSP) has biased composition (basic and acidic residues). Disordered regions lie at residues 1–25 (MSRF…EGLP) and 71–116 (NDAR…EGQP). Positions 74–85 (RSGSSTPISSPR) are enriched in polar residues. In terms of domain architecture, ABC transporter spans 121–382 (LKFTDLTYSV…FLDFGKPIPD (262 aa)). ATP is bound at residue 175–182 (GASGSGKS). The region spanning 484-691 (GVLTRRAFIN…PYEAVMQNEF (208 aa)) is the ABC transmembrane type-2 domain. The next 8 membrane-spanning stretches (helical) occupy residues 500–520 (VFII…TIFW), 535–555 (FFAI…PVFL), 576–596 (VLSH…AFAL), 599–619 (FFSV…AIVL), 620–640 (ASFW…THVM), 641–661 (LGFP…GFFI), 728–745 (SLGV…GPDF), and 760–780 (LWIT…SLLL).

Belongs to the ABC transporter superfamily. ABCG family. Eye pigment precursor importer (TC 3.A.1.204) subfamily. In terms of tissue distribution, expressed in the crown root primordia, endodermis, pericycle and stele in the root, in leaf primordia of main and axillary shoots, and in the vascular cells and leaf epidermis of older leaves.

The protein localises to the cell membrane. Its function is as follows. Essential transporter for growth and development under abiotic stress. Mediates shoot branching by promoting the outgrowth of lateral shoots. Required for salt tolerance via Na/K homeostasis, at least partly by regulating SKC1/OsHKT1;5. Necessary for hypodermal suberization of roots, which contributes to formation of the apoplastic barrier. The polypeptide is ABC transporter G family member 5 (Oryza sativa subsp. japonica (Rice)).